Here is a 502-residue protein sequence, read N- to C-terminus: UPF0371 protein CLJ_B0384 (502 aa).

This sequence belongs to the UPF0371 family.

In Clostridium botulinum (strain 657 / Type Ba4), this protein is UPF0371 protein CLJ_B0384.